The chain runs to 550 residues: Glucose-6-phosphate isomerase 1 (550 aa).

Glu355 (proton donor) is an active-site residue. Active-site residues include His386 and Lys512.

It belongs to the GPI family.

The protein resides in the cytoplasm. The enzyme catalyses alpha-D-glucose 6-phosphate = beta-D-fructose 6-phosphate. It participates in carbohydrate biosynthesis; gluconeogenesis. Its pathway is carbohydrate degradation; glycolysis; D-glyceraldehyde 3-phosphate and glycerone phosphate from D-glucose: step 2/4. Functionally, catalyzes the reversible isomerization of glucose-6-phosphate to fructose-6-phosphate. In Rhodococcus jostii (strain RHA1), this protein is Glucose-6-phosphate isomerase 1.